Here is a 447-residue protein sequence, read N- to C-terminus: Probable alpha-galactosidase B (447 aa).

The signal sequence occupies residues 1-22; sequence MTTFLSLTTAAAVLTLARGSNA. Intrachain disulfides connect Cys45–Cys77 and Cys127–Cys157. Asp155 acts as the Nucleophile in catalysis. N-linked (GlcNAc...) asparagine glycans are attached at residues Asn162 and Asn180. A substrate-binding site is contributed by 225–229; it reads NWGQA. Residue Asn236 is glycosylated (N-linked (GlcNAc...) asparagine). Asp247 functions as the Proton donor in the catalytic mechanism. A glycan (N-linked (GlcNAc...) asparagine) is linked at Asn286.

Belongs to the glycosyl hydrolase 27 family.

Its subcellular location is the secreted. The enzyme catalyses Hydrolysis of terminal, non-reducing alpha-D-galactose residues in alpha-D-galactosides, including galactose oligosaccharides, galactomannans and galactolipids.. In terms of biological role, hydrolyzes a variety of simple alpha-D-galactoside as well as more complex molecules such as oligosaccharides and polysaccharides. The sequence is that of Probable alpha-galactosidase B (aglB) from Neosartorya fischeri (strain ATCC 1020 / DSM 3700 / CBS 544.65 / FGSC A1164 / JCM 1740 / NRRL 181 / WB 181) (Aspergillus fischerianus).